The primary structure comprises 157 residues: MTKTVFVLNGPNLNLLGKREPGIYGVATLDDIEASCKREAGQLELQIDFRQSNHEGDLVSWIQEAGEKNAYVLINPAAYSHTSVAIHDAIRSARVTVVEVHLSNIHAREAFRHHSHVSAVAKGVICGFGAEGYLLGLRALAAIAKEEENNGQSIKGA.

Y24 functions as the Proton acceptor in the catalytic mechanism. Substrate contacts are provided by N75, H81, and D88. H101 (proton donor) is an active-site residue. Substrate contacts are provided by residues 102–103 (LS) and R112.

The protein belongs to the type-II 3-dehydroquinase family. Homododecamer.

The enzyme catalyses 3-dehydroquinate = 3-dehydroshikimate + H2O. The protein operates within metabolic intermediate biosynthesis; chorismate biosynthesis; chorismate from D-erythrose 4-phosphate and phosphoenolpyruvate: step 3/7. Its function is as follows. Catalyzes a trans-dehydration via an enolate intermediate. The protein is 3-dehydroquinate dehydratase of Brucella canis (strain ATCC 23365 / NCTC 10854 / RM-666).